The primary structure comprises 136 residues: Large ribosomal subunit protein uL16 (136 aa).

It belongs to the universal ribosomal protein uL16 family. As to quaternary structure, part of the 50S ribosomal subunit.

Functionally, binds 23S rRNA and is also seen to make contacts with the A and possibly P site tRNAs. The sequence is that of Large ribosomal subunit protein uL16 from Ehrlichia ruminantium (strain Gardel).